A 298-amino-acid chain; its full sequence is S-adenosylmethionine-dependent nucleotide dehydratase (298 aa).

The Radical SAM core domain maps to 8 to 235 (ANKELVVNWH…QRFGEIIYAE (228 aa)). [4Fe-4S] cluster-binding residues include cysteine 22, cysteine 26, and cysteine 29.

This sequence belongs to the radical SAM superfamily. Viperin family. It depends on [4Fe-4S] cluster as a cofactor.

The enzyme catalyses CTP + AH2 + S-adenosyl-L-methionine = 3'-deoxy-3',4'-didehydro-CTP + 5'-deoxyadenosine + L-methionine + A + H2O + H(+). It catalyses the reaction UTP + AH2 + S-adenosyl-L-methionine = 3'-deoxy-3',4'-didehydro-UTP + 5'-deoxyadenosine + L-methionine + A + H2O + H(+). Its function is as follows. Expression of pVip8 in E.coli (strain MG1655) confers resistance to phages lambda, P1, SECphi8 and T7. Prevents culture collapse upon infection with T7. Catalyzes the conversion of cytidine triphosphate (CTP) to 3'-deoxy-3',4'-didehydro-CTP (ddhCTP) and uridine triphosphate (UTP) to 3'-deoxy-3',4'-didehydro-UTP (ddhUTP), probably via a SAM-dependent radical mechanism. The modified nucleotides repress transcription from T7 RNA polymerase-directed genes (possibly by acting as chain terminators), strongly suggesting these nucleotides block viral polymerase transcription. This Psychrobacter lutiphocae (strain DSM 21542 / CCUG 56590 / IMMIB L-1110) protein is S-adenosylmethionine-dependent nucleotide dehydratase.